A 165-amino-acid chain; its full sequence is Large ribosomal subunit protein uL10 (165 aa).

Belongs to the universal ribosomal protein uL10 family. Part of the ribosomal stalk of the 50S ribosomal subunit. The N-terminus interacts with L11 and the large rRNA to form the base of the stalk. The C-terminus forms an elongated spine to which L12 dimers bind in a sequential fashion forming a multimeric L10(L12)X complex.

Forms part of the ribosomal stalk, playing a central role in the interaction of the ribosome with GTP-bound translation factors. The chain is Large ribosomal subunit protein uL10 from Mycoplasmopsis synoviae (strain 53) (Mycoplasma synoviae).